The following is a 95-amino-acid chain: Protein RALF-like 16 (95 aa).

An N-terminal signal peptide occupies residues 1 to 29; that stretch reads MVAYEKSPIVFLFATMMLVMFLFCGSGEA. 2 disulfide bridges follow: cysteine 45-cysteine 53 and cysteine 65-cysteine 71.

It belongs to the plant rapid alkalinization factor (RALF) family.

It localises to the secreted. In terms of biological role, cell signaling peptide that may regulate plant stress, growth, and development. Mediates a rapid alkalinization of extracellular space by mediating a transient increase in the cytoplasmic Ca(2+) concentration leading to a calcium-dependent signaling events through a cell surface receptor and a concomitant activation of some intracellular mitogen-activated protein kinases. The protein is Protein RALF-like 16 (RALFL16) of Arabidopsis thaliana (Mouse-ear cress).